The chain runs to 567 residues: Proline--tRNA ligase (567 aa).

This sequence belongs to the class-II aminoacyl-tRNA synthetase family. ProS type 1 subfamily. Homodimer.

The protein resides in the cytoplasm. It catalyses the reaction tRNA(Pro) + L-proline + ATP = L-prolyl-tRNA(Pro) + AMP + diphosphate. Functionally, catalyzes the attachment of proline to tRNA(Pro) in a two-step reaction: proline is first activated by ATP to form Pro-AMP and then transferred to the acceptor end of tRNA(Pro). As ProRS can inadvertently accommodate and process non-cognate amino acids such as alanine and cysteine, to avoid such errors it has two additional distinct editing activities against alanine. One activity is designated as 'pretransfer' editing and involves the tRNA(Pro)-independent hydrolysis of activated Ala-AMP. The other activity is designated 'posttransfer' editing and involves deacylation of mischarged Ala-tRNA(Pro). The misacylated Cys-tRNA(Pro) is not edited by ProRS. The polypeptide is Proline--tRNA ligase (Stenotrophomonas maltophilia (strain K279a)).